Consider the following 181-residue polypeptide: Negative modulator of initiation of replication (181 aa).

Interaction with DNA stretches follow at residues 87 to 88 (AV), 116 to 120 (RTRVY), and 150 to 156 (NTNTGRK).

It belongs to the SeqA family. As to quaternary structure, homodimer. Polymerizes to form helical filaments.

It is found in the cytoplasm. Functionally, negative regulator of replication initiation, which contributes to regulation of DNA replication and ensures that replication initiation occurs exactly once per chromosome per cell cycle. Binds to pairs of hemimethylated GATC sequences in the oriC region, thus preventing assembly of replication proteins and re-initiation at newly replicated origins. Repression is relieved when the region becomes fully methylated. This Shigella dysenteriae serotype 1 (strain Sd197) protein is Negative modulator of initiation of replication.